Here is a 197-residue protein sequence, read N- to C-terminus: Imidazoleglycerol-phosphate dehydratase (197 aa).

It belongs to the imidazoleglycerol-phosphate dehydratase family.

The protein localises to the cytoplasm. It carries out the reaction D-erythro-1-(imidazol-4-yl)glycerol 3-phosphate = 3-(imidazol-4-yl)-2-oxopropyl phosphate + H2O. It functions in the pathway amino-acid biosynthesis; L-histidine biosynthesis; L-histidine from 5-phospho-alpha-D-ribose 1-diphosphate: step 6/9. This chain is Imidazoleglycerol-phosphate dehydratase, found in Bradyrhizobium sp. (strain BTAi1 / ATCC BAA-1182).